The chain runs to 810 residues: Phospholipase D alpha 2 (810 aa).

The 126-residue stretch at 1-126 (MEECLLHGRL…LHGEEVDRWV (126 aa)) folds into the C2 domain. Aspartate 187 is a binding site for Ca(2+). The PLD phosphodiesterase 1 domain occupies 327 to 365 (TMFTHHQKIVVVDSEMPSGGSRSRRIVSFVGGLDLCDGR). Active-site residues include histidine 332, lysine 334, and aspartate 339. Histidine 332 is a binding site for a 1,2-diacyl-sn-glycero-3-phosphate. Ca(2+)-binding residues include histidine 371 and histidine 405. A 1,2-diacyl-sn-glycero-3-phosphate contacts are provided by glutamine 521 and histidine 661. The PLD phosphodiesterase 2 domain occupies 656-683 (FMIYVHTKMMIVDDEYIIIGSANINQRS). Active-site residues include histidine 661, lysine 663, and aspartate 668. Glutamate 722 is a Ca(2+) binding site.

Belongs to the phospholipase D family. C2-PLD subfamily. The cofactor is Ca(2+). Highly expressed in roots, stems and flowers, moderately in leaves, seedlings and siliques. Not detected in dry seeds.

The protein localises to the cytoplasm. It is found in the membrane. It localises to the vacuole. The protein resides in the cytoplasmic vesicle. Its subcellular location is the clathrin-coated vesicle. It carries out the reaction a 1,2-diacyl-sn-glycero-3-phosphocholine + H2O = a 1,2-diacyl-sn-glycero-3-phosphate + choline + H(+). Functionally, hydrolyzes glycerol-phospholipids at the terminal phosphodiesteric bond to generate phosphatidic acids (PA). Plays an important role in various cellular processes, including phytohormone action and response to stress, characterized by acidification of the cell. The polypeptide is Phospholipase D alpha 2 (Arabidopsis thaliana (Mouse-ear cress)).